A 559-amino-acid polypeptide reads, in one-letter code: Putative ankyrin repeat protein RBE_0902 (559 aa).

ANK repeat units lie at residues 11 to 40, 46 to 75, 81 to 110, 158 to 189, 228 to 257, 263 to 292, 298 to 327, 333 to 364, 372 to 402, and 524 to 554; these read DGWT…EQAI, DGNT…DQAI, DGNT…TKQN, DDWT…VINH, NNDT…DQAI, YGNT…EQAI, QCDT…AINC, FGFT…EVII, and IDNN…WGLE.

In Rickettsia bellii (strain RML369-C), this protein is Putative ankyrin repeat protein RBE_0902.